We begin with the raw amino-acid sequence, 145 residues long: 3-dehydroquinate dehydratase (145 aa).

Catalysis depends on Y23, which acts as the Proton acceptor. Residues N74, H80, and D87 each contribute to the substrate site. Catalysis depends on H100, which acts as the Proton donor. Substrate contacts are provided by residues 101 to 102 (LS) and R111.

Belongs to the type-II 3-dehydroquinase family. As to quaternary structure, homododecamer.

It carries out the reaction 3-dehydroquinate = 3-dehydroshikimate + H2O. The protein operates within metabolic intermediate biosynthesis; chorismate biosynthesis; chorismate from D-erythrose 4-phosphate and phosphoenolpyruvate: step 3/7. Catalyzes a trans-dehydration via an enolate intermediate. In Bacillus licheniformis (strain ATCC 14580 / DSM 13 / JCM 2505 / CCUG 7422 / NBRC 12200 / NCIMB 9375 / NCTC 10341 / NRRL NRS-1264 / Gibson 46), this protein is 3-dehydroquinate dehydratase.